A 717-amino-acid polypeptide reads, in one-letter code: Polyribonucleotide nucleotidyltransferase (717 aa).

Residues Asp488 and Asp494 each coordinate Mg(2+). The KH domain occupies 555–614 (PRIEVMNIPVDKIREVIGSGGKVIREIVEKTGAKINIEDDGTVKIASSSGKEIEAARKWI). Residues 624–692 (GQIYEGTVVK…ERGKVRLSMK (69 aa)) form the S1 motif domain.

The protein belongs to the polyribonucleotide nucleotidyltransferase family. Requires Mg(2+) as cofactor.

It is found in the cytoplasm. The catalysed reaction is RNA(n+1) + phosphate = RNA(n) + a ribonucleoside 5'-diphosphate. Its function is as follows. Involved in mRNA degradation. Catalyzes the phosphorolysis of single-stranded polyribonucleotides processively in the 3'- to 5'-direction. The chain is Polyribonucleotide nucleotidyltransferase from Sinorhizobium fredii (strain NBRC 101917 / NGR234).